Reading from the N-terminus, the 425-residue chain is Inhibin beta A chain (425 aa).

The N-terminal stretch at 1 to 20 (MPLLWLRGFLLASCWIIVRS) is a signal peptide. The propeptide occupies 21–309 (SPTPGSEGHS…EDHPHRRRRR (289 aa)). Asn-165 carries N-linked (GlcNAc...) asparagine glycosylation. Residues 260–289 (KKRKEEEGEGKKRDGEGGAGGDEEKEQSHR) form a disordered region. The segment covering 263-275 (KEEEGEGKKRDGE) has biased composition (basic and acidic residues). Intrachain disulfides connect Cys-313/Cys-321, Cys-320/Cys-390, Cys-349/Cys-422, and Cys-353/Cys-424.

This sequence belongs to the TGF-beta family. Dimeric, linked by one or more disulfide bonds. Inhibin A is a dimer of alpha/INHA and beta-A/INHBA. Activin A is a homodimer of beta-A/INHBA. Activin AB is a dimer of beta-A/INHBA and beta-B/INHBB. Interacts with FST and FSTL3; these interactions prevent activin A interaction to its type II receptor. Activin A interacts with ACVR2A. Activin A interacts with BMPR2. Inhibin A interacts with ACVR1; this interaction creates a non-signaling complex (NSC) that inhibits ACVR1-mediated BMP signaling. Inhibin A interacts with ACVR2A.

Its subcellular location is the secreted. Its function is as follows. Inhibins/activins are involved in regulating a number of diverse functions such as hypothalamic and pituitary hormone secretion, gonadal hormone secretion, germ cell development and maturation, erythroid differentiation, insulin secretion, nerve cell survival, embryonic axial development or bone growth, depending on their subunit composition. In terms of biological role, activin A is a homodimer of INHBA that plays a role in several essential biological processes including embryonic development, stem cell maintenance and differentiation, haematopoiesis, cell proliferation and tissue fibrosis. Signals through type I (such as ACVR1B or ACVR1C) and type II receptors (such as ACVR2A, ACVR2B or BMPR2) which, upon ligand binding, phosphorylate SMAD2 and SMAD3 intracellular signaling mediators that form a complex with SMAD4, translocate to the nucleus and modulate gene expression. Can also activate alternative non-canonical intracellular signaling pathways including the p38 MAPK, extracellular signal-regulated kinases 1/2 (ERK1/2) and c-Jun N-terminal kinases (JNKs) to modulate cell migration and differentiation. Alternatively, promotes osteoblastic differentiation via ACVRL1-SMAD1/5/9 pathway. In addition, can engage the type I receptor ACVR1 to form an ACVR1-activin A-type II receptor non-signaling complex (NSC) that renders receptors unavailable for engagement with BMPs, hence resulting in an apparent inhibition of ACVR1-mediated BMP signaling. Inhibin A is a dimer of alpha/INHA and beta-A/INHBA that functions as a feedback regulator in the hypothalamic-pituitary-gonadal (HPG) axis. Inhibits the secretion of FSH from the anterior pituitary gland by acting on pituitary gonadotrope cells. Antagonizes activin A by binding to the proteoglycan, betaglycan, and forming a stable complex with and, thereby, sequestering type II activin receptors while excluding type I receptor. In Ovis aries (Sheep), this protein is Inhibin beta A chain (INHBA).